A 130-amino-acid chain; its full sequence is Small ribosomal subunit protein uS8 (130 aa).

This sequence belongs to the universal ribosomal protein uS8 family. In terms of assembly, part of the 30S ribosomal subunit. Contacts proteins S5 and S12.

In terms of biological role, one of the primary rRNA binding proteins, it binds directly to 16S rRNA central domain where it helps coordinate assembly of the platform of the 30S subunit. The protein is Small ribosomal subunit protein uS8 of Cytophaga hutchinsonii (strain ATCC 33406 / DSM 1761 / CIP 103989 / NBRC 15051 / NCIMB 9469 / D465).